Reading from the N-terminus, the 477-residue chain is Inner membrane transporter YgjI (477 aa).

Over 1–8 the chain is Periplasmic; the sequence is MSDTKRNT. A helical membrane pass occupies residues 9-29; that stretch reads IGKFGLLSLTFAAVYSFNNVI. The Cytoplasmic segment spans residues 30 to 41; that stretch reads NNNIELGLASAP. A helical membrane pass occupies residues 42–62; the sequence is MFFLATIFYFIPFCLIIAEFV. The Periplasmic portion of the chain corresponds to 63–83; the sequence is SLNKNSEAGVYAWVKSSLGGR. The chain crosses the membrane as a helical span at residues 84–104; that stretch reads WAFITAYTYWFVNLFFFTSLL. Over 105–120 the chain is Cytoplasmic; the sequence is PRVIAYASYAFLGYEY. A helical membrane pass occupies residues 121–141; sequence IMTPVATTIISMVLFAFSTWV. Residues 142 to 158 are Periplasmic-facing; the sequence is STNGAKMLGPITSVTST. The helical transmembrane segment at 159 to 179 threads the bilayer; it reads LMLLLTLSYILLAGTALVGGV. The Cytoplasmic portion of the chain corresponds to 180–196; that stretch reads QPADAITVDAMIPNFNW. A helical transmembrane segment spans residues 197-217; it reads AFLGVTTWIFMAAGGAESVAV. Topologically, residues 218-232 are periplasmic; the sequence is YVNDVKGGSKSFVKV. Residues 233 to 253 form a helical membrane-spanning segment; sequence IILAGIFIGVLYSVSSVLINV. At 254-263 the chain is on the cytoplasmic side; it reads FVSSKELKFT. A helical transmembrane segment spans residues 264-284; sequence GGSVQVFHGMAAYFGLPEALM. Over 285–286 the chain is Periplasmic; that stretch reads NR. Residues 287–307 form a helical membrane-spanning segment; the sequence is FVGLVSFTAMFGSLLMWTATP. Residues 308-335 lie on the Cytoplasmic side of the membrane; it reads VKIFFSEIPEGIFGKKTVELNENGVPAR. A helical transmembrane segment spans residues 336 to 356; that stretch reads AAWIQFLIVIPLMIIPMLGSN. Residues 357 to 364 lie on the Periplasmic side of the membrane; sequence TVQDLMNT. Residues 365–385 traverse the membrane as a helical segment; it reads IINMTAAASMLPPLFIMLAYL. At 386–405 the chain is on the cytoplasmic side; the sequence is NLRAKLDHLPRDFRMGSRRT. Residues 406–426 form a helical membrane-spanning segment; it reads GIIVVSMLIAIFAVGFVASTF. Over 427–431 the chain is Periplasmic; that stretch reads PTGAN. The helical transmembrane segment at 432–452 threads the bilayer; it reads ILTIIFYNVGGIVIFLGFAWW. At 453-477 the chain is on the cytoplasmic side; that stretch reads KYSKYIKGLTAEERHIEATPASNVD.

The protein belongs to the amino acid-polyamine-organocation (APC) superfamily.

The protein localises to the cell inner membrane. The chain is Inner membrane transporter YgjI (ygjI) from Escherichia coli (strain K12).